Reading from the N-terminus, the 215-residue chain is Transcription elongation factor A protein-like 4 (215 aa).

The residue at position 1 (Met1) is an N-acetylmethionine. Residues 1–133 (MEKLYSENEG…RKAKRKTNKG (133 aa)) form a disordered region. 3 positions are modified to phosphoserine: Ser6, Ser88, and Ser102. Basic and acidic residues predominate over residues 25 to 102 (QDERKPEVTC…KPEIEGKPES (78 aa)).

The protein belongs to the TFS-II family. TFA subfamily.

It localises to the nucleus. Its function is as follows. May be involved in transcriptional regulation. This Homo sapiens (Human) protein is Transcription elongation factor A protein-like 4 (TCEAL4).